Here is a 103-residue protein sequence, read N- to C-terminus: NADH-quinone oxidoreductase subunit K (103 aa).

The next 3 helical transmembrane spans lie at 6-26, 32-52, and 63-83; these read LAHYLVLGAVLFAISIVGIFL, IVLLMAIELMLLAVNLNFVAF, and VFVFFILTVAAAESAIGLAIL.

This sequence belongs to the complex I subunit 4L family. As to quaternary structure, NDH-1 is composed of 14 different subunits. Subunits NuoA, H, J, K, L, M, N constitute the membrane sector of the complex.

The protein resides in the cell inner membrane. It carries out the reaction a quinone + NADH + 5 H(+)(in) = a quinol + NAD(+) + 4 H(+)(out). Functionally, NDH-1 shuttles electrons from NADH, via FMN and iron-sulfur (Fe-S) centers, to quinones in the respiratory chain. The immediate electron acceptor for the enzyme in this species is believed to be ubiquinone. Couples the redox reaction to proton translocation (for every two electrons transferred, four hydrogen ions are translocated across the cytoplasmic membrane), and thus conserves the redox energy in a proton gradient. The polypeptide is NADH-quinone oxidoreductase subunit K (Ralstonia pickettii (strain 12D)).